The primary structure comprises 173 residues: Small ribosomal subunit protein uS4c (173 aa).

Positions 94 to 155 constitute an S4 RNA-binding domain; sequence SRLDSKIYRS…TKLTSELIEK (62 aa).

It belongs to the universal ribosomal protein uS4 family. In terms of assembly, part of the 30S ribosomal subunit. Contacts protein S5. The interaction surface between S4 and S5 is involved in control of translational fidelity.

The protein resides in the plastid. One of the primary rRNA binding proteins, it binds directly to 16S rRNA where it nucleates assembly of the body of the 30S subunit. Functionally, with S5 and S12 plays an important role in translational accuracy. The sequence is that of Small ribosomal subunit protein uS4c (rps4) from Helicosporidium sp. subsp. Simulium jonesii (Green alga).